Consider the following 99-residue polypeptide: MHGEITTLQDYVLDLEPEATDLYCYEQLCDSSEEEEDTIDGPAGQAKPDTSNYNIVTSCCKCEATLRLCVQSTHIDIRKLEDLLMGTFGIVCPGCSQRA.

Positions 1–41 (MHGEITTLQDYVLDLEPEATDLYCYEQLCDSSEEEEDTIDG) are E7 terminal domain. The LXCXE motif; interaction with host RB1 and TMEM173/STING motif lies at 22–26 (LYCYE). A zinc finger lies at 59 to 95 (CCKCEATLRLCVQSTHIDIRKLEDLLMGTFGIVCPGC). Positions 77 to 85 (IRKLEDLLM) match the Nuclear export signal motif.

It belongs to the papillomaviridae E7 protein family. In terms of assembly, homodimer. Homooligomer. Interacts with host RB1; this interaction induces dissociation of RB1-E2F1 complex thereby disrupting RB1 activity. Interacts with host EP300; this interaction represses EP300 transcriptional activity. Interacts with protein E2; this interaction inhibits E7 oncogenic activity. Interacts with host TMEM173/STING; this interaction impairs the ability of TMEM173/STING to sense cytosolic DNA and promote the production of type I interferon (IFN-alpha and IFN-beta). Post-translationally, highly phosphorylated.

It localises to the host cytoplasm. Its subcellular location is the host nucleus. Plays a role in viral genome replication by driving entry of quiescent cells into the cell cycle. Stimulation of progression from G1 to S phase allows the virus to efficiently use the cellular DNA replicating machinery to achieve viral genome replication. E7 protein has both transforming and trans-activating activities. Induces the disassembly of the E2F1 transcription factor from RB1, with subsequent transcriptional activation of E2F1-regulated S-phase genes. Interferes with host histone deacetylation mediated by HDAC1 and HDAC2, leading to transcription activation. Also plays a role in the inhibition of both antiviral and antiproliferative functions of host interferon alpha. Interaction with host TMEM173/STING impairs the ability of TMEM173/STING to sense cytosolic DNA and promote the production of type I interferon (IFN-alpha and IFN-beta). The chain is Protein E7 from Human papillomavirus 35.